The following is a 241-amino-acid chain: Platelet-derived growth factor subunit B (241 aa).

Positions Met-1–Ala-20 are cleaved as a signal peptide. Residues Glu-21–Arg-81 constitute a propeptide, removed in mature form. A glycan (N-linked (GlcNAc...) asparagine) is linked at Asn-63. Cystine bridges form between Cys-97–Cys-141, Cys-130–Cys-178, and Cys-134–Cys-180. A propeptide spans Arg-191 to Ala-241 (removed in mature form). Basic residues predominate over residues Arg-216–His-230. Residues Arg-216–Ala-241 form a disordered region.

It belongs to the PDGF/VEGF growth factor family. Antiparallel homodimer; disulfide-linked. Antiparallel heterodimer with PDGFA; disulfide-linked. The PDGFB homodimer interacts with PDGFRA and PDGFRB homodimers, and with heterodimers formed by PDGFRA and PDGFRB. The heterodimer composed of PDGFA and PDGFB interacts with PDGFRB homodimers, and with heterodimers formed by PDGFRA and PDGFRB. Interacts with XLKD1. Interacts with LRP1. Interacts with SORL1 (via the N-terminal ectodomain). Interacts with CD82; this interaction inhibits PDGFB-mediated signaling pathway. In terms of tissue distribution, expressed at high levels in the heart, brain (sustantia nigra), placenta and fetal kidney. Expressed at moderate levels in the brain (hippocampus), skeletal muscle, kidney and lung.

It localises to the secreted. In terms of biological role, growth factor that plays an essential role in the regulation of embryonic development, cell proliferation, cell migration, survival and chemotaxis. Potent mitogen for cells of mesenchymal origin. Required for normal proliferation and recruitment of pericytes and vascular smooth muscle cells in the central nervous system, skin, lung, heart and placenta. Required for normal blood vessel development, and for normal development of kidney glomeruli. Plays an important role in wound healing. Signaling is modulated by the formation of heterodimers with PDGFA. The chain is Platelet-derived growth factor subunit B (PDGFB) from Homo sapiens (Human).